The chain runs to 95 residues: Small ribosomal subunit protein bS18 (95 aa).

This sequence belongs to the bacterial ribosomal protein bS18 family. Part of the 30S ribosomal subunit. Forms a tight heterodimer with protein bS6.

Binds as a heterodimer with protein bS6 to the central domain of the 16S rRNA, where it helps stabilize the platform of the 30S subunit. The sequence is that of Small ribosomal subunit protein bS18 from Rickettsia africae (strain ESF-5).